The chain runs to 349 residues: MAKNQWRPYTNGSHAPSTPRHLLSIADLTPTEFATLVRNASSYKKTIKSDSMPERLTGALSGKTVAMMFSKRSTRTRVSTEGAVVKMGGHPMFLGKDDIQLGVNESLYDTSVVISSMVSCIVARVGPHSDIANLAKHSSVPVINALCDTFHPLQAIADFLTIHESFASQSATHGTHPSSLGLEGLKIAWVGDANNVLFDLAIAATKMGVNVAVATPRGYEIPSHIVELIQKAREGVQSPGNLTQTTVPEVAVKDADVIVTDTWISMGQETEKIKRLEAFKDFKVTSELAKRGGAKENWKFMHCLPRHPEEVSDEVFYSERSLVFPEAENRLWAAISALEAFVVNKGKIA.

Carbamoyl phosphate is bound by residues 73–76 (STRT), arginine 124, histidine 151, and glutamine 154. Residues asparagine 195, aspartate 261, serine 265, and methionine 266 each coordinate L-ornithine. The active-site Proton acceptor is cysteine 303. Residues 303–304 (CL) and arginine 330 contribute to the carbamoyl phosphate site.

Belongs to the aspartate/ornithine carbamoyltransferase superfamily. OTCase family. In terms of assembly, homotrimer.

The protein localises to the mitochondrion matrix. It catalyses the reaction carbamoyl phosphate + L-ornithine = L-citrulline + phosphate + H(+). It functions in the pathway amino-acid biosynthesis; L-arginine biosynthesis; L-arginine from L-ornithine and carbamoyl phosphate: step 1/3. In Coccidioides immitis (strain RS) (Valley fever fungus), this protein is Ornithine carbamoyltransferase, mitochondrial.